Reading from the N-terminus, the 587-residue chain is Glutaconyl-CoA decarboxylase subunit alpha (587 aa).

A CoA carboxyltransferase N-terminal domain is found at 31-298 (LKKIEEEIHQ…YDPEFFRVDD (268 aa)). Positions 31–558 (LKKIEEEIHQ…RGYVEAFTEA (528 aa)) are carboxyltransferase. The 264-residue stretch at 295 to 558 (RVDDPKAPAF…RGYVEAFTEA (264 aa)) folds into the CoA carboxyltransferase C-terminal domain.

Heterooctamer consisting of two alpha, two beta, two gamma and two delta subunits.

The catalysed reaction is (2E)-glutaconyl-CoA + Na(+)(in) + H(+) = (2E)-butenoyl-CoA + Na(+)(out) + CO2. The protein operates within amino-acid degradation; L-glutamate degradation via hydroxyglutarate pathway; crotonoyl-CoA from L-glutamate: step 5/5. Decarboxylase subunit of the primary sodium pump glutaconyl-CoA decarboxylase (GCD). This Acidaminococcus fermentans (strain ATCC 25085 / DSM 20731 / CCUG 9996 / CIP 106432 / VR4) protein is Glutaconyl-CoA decarboxylase subunit alpha (gcdA).